A 271-amino-acid polypeptide reads, in one-letter code: Formamidopyrimidine-DNA glycosylase (271 aa).

Catalysis depends on proline 2, which acts as the Schiff-base intermediate with DNA. Catalysis depends on glutamate 3, which acts as the Proton donor. Lysine 57 functions as the Proton donor; for beta-elimination activity in the catalytic mechanism. Residues histidine 90, arginine 109, and lysine 151 each coordinate DNA. Residues 236–270 (HVYGRGGETCTQCGHLLSEIKLGQRATVFCSLCQK) form an FPG-type zinc finger. Arginine 260 serves as the catalytic Proton donor; for delta-elimination activity.

It belongs to the FPG family. In terms of assembly, monomer. Requires Zn(2+) as cofactor.

The catalysed reaction is Hydrolysis of DNA containing ring-opened 7-methylguanine residues, releasing 2,6-diamino-4-hydroxy-5-(N-methyl)formamidopyrimidine.. It catalyses the reaction 2'-deoxyribonucleotide-(2'-deoxyribose 5'-phosphate)-2'-deoxyribonucleotide-DNA = a 3'-end 2'-deoxyribonucleotide-(2,3-dehydro-2,3-deoxyribose 5'-phosphate)-DNA + a 5'-end 5'-phospho-2'-deoxyribonucleoside-DNA + H(+). Involved in base excision repair of DNA damaged by oxidation or by mutagenic agents. Acts as a DNA glycosylase that recognizes and removes damaged bases. Has a preference for oxidized purines, such as 7,8-dihydro-8-oxoguanine (8-oxoG). Has AP (apurinic/apyrimidinic) lyase activity and introduces nicks in the DNA strand. Cleaves the DNA backbone by beta-delta elimination to generate a single-strand break at the site of the removed base with both 3'- and 5'-phosphates. The polypeptide is Formamidopyrimidine-DNA glycosylase (Shewanella halifaxensis (strain HAW-EB4)).